A 95-amino-acid polypeptide reads, in one-letter code: Co-chaperonin GroES (95 aa).

This sequence belongs to the GroES chaperonin family. As to quaternary structure, heptamer of 7 subunits arranged in a ring. Interacts with the chaperonin GroEL.

It localises to the cytoplasm. Its function is as follows. Together with the chaperonin GroEL, plays an essential role in assisting protein folding. The GroEL-GroES system forms a nano-cage that allows encapsulation of the non-native substrate proteins and provides a physical environment optimized to promote and accelerate protein folding. GroES binds to the apical surface of the GroEL ring, thereby capping the opening of the GroEL channel. This is Co-chaperonin GroES from Caldicellulosiruptor bescii (strain ATCC BAA-1888 / DSM 6725 / KCTC 15123 / Z-1320) (Anaerocellum thermophilum).